A 270-amino-acid chain; its full sequence is MIKSIILQAIMVLSTLTSVHGANSSGCGKQPTLVNGVHKINDREYILKVPDNYNANKPHHLIFGLHWRGGNMNSVVNGESVEPWYGLETRAQGSAILVAPNGRNAGWANINGEDVALIDAIIKQVEDDLCIDQSSRFATGFSWGGGMSYALACARAKEFRAVSVLSGGVISGCEGGHDPIAYLGIHGISDPVLPFDGGVTLANKFAANNGCQQTYVGKPGLGSHSSVQTDFKGCSRPVSFIAYDGGHDAAPLGVGNPLAPDATWKFFMAA.

The signal sequence occupies residues 1 to 21; it reads MIKSIILQAIMVLSTLTSVHG. Residue N23 is glycosylated (N-linked (GlcNAc...) asparagine).

Belongs to the faeC family.

It localises to the secreted. The catalysed reaction is feruloyl-polysaccharide + H2O = ferulate + polysaccharide.. In terms of biological role, involved in degradation of plant cell walls. Hydrolyzes the feruloyl-arabinose ester bond in arabinoxylans, and the feruloyl-galactose ester bond in pectin. Active against paranitrophenyl-acetate, methyl ferulate and wheat arabinoxylan. The sequence is that of Probable feruloyl esterase C (faeC) from Aspergillus oryzae (strain ATCC 42149 / RIB 40) (Yellow koji mold).